The chain runs to 513 residues: Light-independent protochlorophyllide reductase subunit B (513 aa).

Residue D36 participates in [4Fe-4S] cluster binding. The active-site Proton donor is D299. A substrate-binding site is contributed by 434–435 (GM).

It belongs to the ChlB/BchB/BchZ family. In terms of assembly, protochlorophyllide reductase is composed of three subunits; ChlL, ChlN and ChlB. Forms a heterotetramer of two ChlB and two ChlN subunits. [4Fe-4S] cluster is required as a cofactor.

It localises to the plastid. It is found in the chloroplast. It catalyses the reaction chlorophyllide a + oxidized 2[4Fe-4S]-[ferredoxin] + 2 ADP + 2 phosphate = protochlorophyllide a + reduced 2[4Fe-4S]-[ferredoxin] + 2 ATP + 2 H2O. It functions in the pathway porphyrin-containing compound metabolism; chlorophyll biosynthesis (light-independent). Component of the dark-operative protochlorophyllide reductase (DPOR) that uses Mg-ATP and reduced ferredoxin to reduce ring D of protochlorophyllide (Pchlide) to form chlorophyllide a (Chlide). This reaction is light-independent. The NB-protein (ChlN-ChlB) is the catalytic component of the complex. The protein is Light-independent protochlorophyllide reductase subunit B of Staurastrum punctulatum (Green alga).